Reading from the N-terminus, the 726-residue chain is Kinesin-like protein KIN-10B (726 aa).

Disordered regions lie at residues 1–20, 60–82, and 402–423; these read MEQQQKQEPGGGGGGVRVVA, AATAAASGRGDGPKDKQQQQQQK, and KNARPGFNNSGVKGGQTPTANR. Residues 15–359 form the Kinesin motor domain; it reads GVRVVARICP…LALASRSSQV (345 aa). Positions 408 to 423 are enriched in polar residues; sequence FNNSGVKGGQTPTANR.

Belongs to the TRAFAC class myosin-kinesin ATPase superfamily. Kinesin family. KIN-10 subfamily.

This chain is Kinesin-like protein KIN-10B, found in Oryza sativa subsp. japonica (Rice).